Reading from the N-terminus, the 712-residue chain is Small ribosomal subunit protein uS3c (712 aa).

An S3-like 1st part region spans residues 1 to 118 (MGQKVHPLGF…IKVSKDLVTN (118 aa)). The tract at residues 119-580 (LQKTRKYLFK…LQTAFLTQIE (462 aa)) is intervening sequence (IVS). An S3-like 2nd part region spans residues 581–712 (SQRKMYKANL…VWIFKGYSKI (132 aa)).

This sequence belongs to the universal ribosomal protein uS3 family. Part of the 30S ribosomal subunit.

The protein resides in the plastid. It is found in the chloroplast. This Chlamydomonas reinhardtii (Chlamydomonas smithii) protein is Small ribosomal subunit protein uS3c (rps3).